A 219-amino-acid chain; its full sequence is 2-C-methyl-D-erythritol 4-phosphate cytidylyltransferase (219 aa).

The protein belongs to the IspD/TarI cytidylyltransferase family. IspD subfamily.

The enzyme catalyses 2-C-methyl-D-erythritol 4-phosphate + CTP + H(+) = 4-CDP-2-C-methyl-D-erythritol + diphosphate. It participates in isoprenoid biosynthesis; isopentenyl diphosphate biosynthesis via DXP pathway; isopentenyl diphosphate from 1-deoxy-D-xylulose 5-phosphate: step 2/6. In terms of biological role, catalyzes the formation of 4-diphosphocytidyl-2-C-methyl-D-erythritol from CTP and 2-C-methyl-D-erythritol 4-phosphate (MEP). The sequence is that of 2-C-methyl-D-erythritol 4-phosphate cytidylyltransferase from Chlamydia trachomatis serovar D (strain ATCC VR-885 / DSM 19411 / UW-3/Cx).